A 201-amino-acid chain; its full sequence is Large ribosomal subunit protein uL4 (201 aa).

Positions 43-66 are disordered; that stretch reads TRAQKTRSEVSGGGKKPWRQKGTG.

This sequence belongs to the universal ribosomal protein uL4 family. As to quaternary structure, part of the 50S ribosomal subunit.

One of the primary rRNA binding proteins, this protein initially binds near the 5'-end of the 23S rRNA. It is important during the early stages of 50S assembly. It makes multiple contacts with different domains of the 23S rRNA in the assembled 50S subunit and ribosome. Functionally, forms part of the polypeptide exit tunnel. In Tolumonas auensis (strain DSM 9187 / NBRC 110442 / TA 4), this protein is Large ribosomal subunit protein uL4.